Consider the following 276-residue polypeptide: 3-methyl-2-oxobutanoate hydroxymethyltransferase (276 aa).

Residues Asp45 and Asp84 each coordinate Mg(2+). Residues 45-46, Asp84, and Lys114 each bind 3-methyl-2-oxobutanoate; that span reads DS. Residue Glu116 coordinates Mg(2+). Glu183 acts as the Proton acceptor in catalysis.

This sequence belongs to the PanB family. Homodecamer; pentamer of dimers. Requires Mg(2+) as cofactor.

The protein localises to the cytoplasm. The enzyme catalyses 3-methyl-2-oxobutanoate + (6R)-5,10-methylene-5,6,7,8-tetrahydrofolate + H2O = 2-dehydropantoate + (6S)-5,6,7,8-tetrahydrofolate. The protein operates within cofactor biosynthesis; (R)-pantothenate biosynthesis; (R)-pantoate from 3-methyl-2-oxobutanoate: step 1/2. Its function is as follows. Catalyzes the reversible reaction in which hydroxymethyl group from 5,10-methylenetetrahydrofolate is transferred onto alpha-ketoisovalerate to form ketopantoate. This is 3-methyl-2-oxobutanoate hydroxymethyltransferase from Carboxydothermus hydrogenoformans (strain ATCC BAA-161 / DSM 6008 / Z-2901).